The sequence spans 118 residues: Late cornified envelope protein 5A (118 aa).

Low complexity predominate over residues 1–10 (MSCQQSQQQC). Disordered stretches follow at residues 1 to 32 (MSCQ…PPKC) and 72 to 118 (HRPR…GGCC). Pro residues predominate over residues 11 to 32 (QPPPKCTPKCPPKCTPKCPPKC). Over residues 72–82 (HRPRQSLRRRP) the composition is skewed to basic residues. Residues 97-118 (GGSSCCHSSGGSGCCHSSGGCC) are compositionally biased toward low complexity.

Belongs to the LCE family. As to quaternary structure, interacts with CYSRT1; the interaction is direct. As to expression, skin-specific. Expression was readily detected in adult trunk skin, adult arm skin, fetal skin, penal skin, vulva, esophagus and tongue. Not expressed in the cervix, rectum, lung, colon, or placenta. Expression is observed in the heart.

Precursors of the cornified envelope of the stratum corneum. The sequence is that of Late cornified envelope protein 5A (LCE5A) from Homo sapiens (Human).